The sequence spans 643 residues: RNA-binding protein MEX3D (643 aa).

Disordered regions lie at residues 1–48 (MPGS…DAAA) and 61–92 (GLGG…APPD). Over residues 18 to 34 (TAGDPGHPHPALAGAED) the composition is skewed to low complexity. Residues 83–92 (CGEDEPAPPD) show a composition bias toward acidic residues. KH domains are found at residues 160-221 (MTEC…KREI) and 253-314 (QTTI…REEI). Disordered regions lie at residues 357-427 (PHPG…GTAT), 471-505 (GAPA…GGLS), and 519-583 (VGAV…APGP). The span at 405 to 418 (GGSGNGGFTFGGDG) shows a compositional bias: gly residues. Residue Thr491 is modified to Phosphothreonine. Ser495 carries the phosphoserine modification. Low complexity-rich tracts occupy residues 495 to 505 (SPTLPEPGGLS), 531 to 556 (LPPF…SSTL), and 567 to 583 (PSTT…APGP). The RING-type zinc-finger motif lies at 592-632 (CVVCSEGEAMAALVPCGHNLFCMDCAVRICGKSEPECPACR).

The protein localises to the cytoplasm. It is found in the nucleus. Its function is as follows. RNA binding protein, may be involved in post-transcriptional regulatory mechanisms. The polypeptide is RNA-binding protein MEX3D (Mex3d) (Mus musculus (Mouse)).